Reading from the N-terminus, the 67-residue chain is Large ribosomal subunit protein bL32 (67 aa).

Residues 1–19 (MAVPKRKMSRSNTRARRSQ) are compositionally biased toward basic residues. The interval 1-21 (MAVPKRKMSRSNTRARRSQWK) is disordered.

The protein belongs to the bacterial ribosomal protein bL32 family.

This is Large ribosomal subunit protein bL32 from Clavibacter michiganensis subsp. michiganensis (strain NCPPB 382).